The following is a 486-amino-acid chain: Glutamate--tRNA ligase (486 aa).

Residues 11 to 21 (PSPTGLLHIGN) carry the 'HIGH' region motif. Residues 255 to 259 (KLSKR) carry the 'KMSKS' region motif. Lys-258 contributes to the ATP binding site.

This sequence belongs to the class-I aminoacyl-tRNA synthetase family. Glutamate--tRNA ligase type 1 subfamily. In terms of assembly, monomer.

The protein localises to the cytoplasm. It catalyses the reaction tRNA(Glu) + L-glutamate + ATP = L-glutamyl-tRNA(Glu) + AMP + diphosphate. Its function is as follows. Catalyzes the attachment of glutamate to tRNA(Glu) in a two-step reaction: glutamate is first activated by ATP to form Glu-AMP and then transferred to the acceptor end of tRNA(Glu). This is Glutamate--tRNA ligase from Streptococcus pneumoniae (strain ATCC BAA-255 / R6).